The primary structure comprises 62 residues: Large ribosomal subunit protein uL30 (62 aa).

The protein belongs to the universal ribosomal protein uL30 family. Part of the 50S ribosomal subunit.

The sequence is that of Large ribosomal subunit protein uL30 from Nitrosospira multiformis (strain ATCC 25196 / NCIMB 11849 / C 71).